The chain runs to 92 residues: MRFCPKCGSFLKVKGNKMVCSKCGYSDHDVEKVILKENVAHENDKTIIADGETIEGRVAISLCPRCGSVRAILLNKKKRLYRCMTCNFVYNI.

Positions 1-31 (MRFCPKCGSFLKVKGNKMVCSKCGYSDHDVE) are ZR-N. Cys4, Cys7, Cys20, and Cys23 together coordinate Zn(2+). A flexible linker region spans residues 32–56 (KVILKENVAHENDKTIIADGETIEG). Positions 55–92 (EGRVAISLCPRCGSVRAILLNKKKRLYRCMTCNFVYNI) are ZR-C. Zn(2+)-binding residues include Cys63 and Cys66. Residues Lys76, Lys77, and Lys78 contribute to the active site. Zn(2+) is bound by residues Cys83 and Cys86.

The protein belongs to the archaeal RpoM/eukaryotic RPA12/RPB9/RPC11 RNA polymerase family. In terms of assembly, interacts with RNA polymerase. The cofactor is Zn(2+).

Its function is as follows. A potent inhibitor of RNA polymerase (RNAP) probably involved in viral defense. Destabilizes the transcription pre-initiation complex of TBP, TFB, DNA and RNAP, inhibits abortive transcription initiation, productive initiation and transcription elongation. Increases the RNAP KM for NTPs about 50-fold. Overexpression of TFS1-tip4 (TFS1 with the active tip of this protein, phenocopies this protein) in S.acidocaldarius MW001 leads to severe growth inhibition. When bound to RNAP induces conformational changes that widen the DNA-binding channel, probably destabilizing the interaction of DNA with RNAP. In Saccharolobus solfataricus (strain ATCC 35092 / DSM 1617 / JCM 11322 / P2) (Sulfolobus solfataricus), this protein is Transcription factor S4.